The sequence spans 353 residues: UDP-N-acetylglucosamine--N-acetylmuramyl-(pentapeptide) pyrophosphoryl-undecaprenol N-acetylglucosamine transferase (353 aa).

UDP-N-acetyl-alpha-D-glucosamine-binding positions include 14-16, Asn126, Arg162, Ser190, Ile243, 262-267, and Gln287; these read TGG and ALTVSE.

The protein belongs to the glycosyltransferase 28 family. MurG subfamily.

The protein localises to the cell inner membrane. It catalyses the reaction di-trans,octa-cis-undecaprenyl diphospho-N-acetyl-alpha-D-muramoyl-L-alanyl-D-glutamyl-meso-2,6-diaminopimeloyl-D-alanyl-D-alanine + UDP-N-acetyl-alpha-D-glucosamine = di-trans,octa-cis-undecaprenyl diphospho-[N-acetyl-alpha-D-glucosaminyl-(1-&gt;4)]-N-acetyl-alpha-D-muramoyl-L-alanyl-D-glutamyl-meso-2,6-diaminopimeloyl-D-alanyl-D-alanine + UDP + H(+). Its pathway is cell wall biogenesis; peptidoglycan biosynthesis. Its function is as follows. Cell wall formation. Catalyzes the transfer of a GlcNAc subunit on undecaprenyl-pyrophosphoryl-MurNAc-pentapeptide (lipid intermediate I) to form undecaprenyl-pyrophosphoryl-MurNAc-(pentapeptide)GlcNAc (lipid intermediate II). The sequence is that of UDP-N-acetylglucosamine--N-acetylmuramyl-(pentapeptide) pyrophosphoryl-undecaprenol N-acetylglucosamine transferase from Vibrio atlanticus (strain LGP32) (Vibrio splendidus (strain Mel32)).